The chain runs to 146 residues: D-aminoacyl-tRNA deacylase (146 aa).

The Gly-cisPro motif, important for rejection of L-amino acids motif lies at 137-138; it reads GP.

It belongs to the DTD family. Homodimer.

The protein resides in the cytoplasm. The enzyme catalyses glycyl-tRNA(Ala) + H2O = tRNA(Ala) + glycine + H(+). The catalysed reaction is a D-aminoacyl-tRNA + H2O = a tRNA + a D-alpha-amino acid + H(+). An aminoacyl-tRNA editing enzyme that deacylates mischarged D-aminoacyl-tRNAs. Also deacylates mischarged glycyl-tRNA(Ala), protecting cells against glycine mischarging by AlaRS. Acts via tRNA-based rather than protein-based catalysis; rejects L-amino acids rather than detecting D-amino acids in the active site. By recycling D-aminoacyl-tRNA to D-amino acids and free tRNA molecules, this enzyme counteracts the toxicity associated with the formation of D-aminoacyl-tRNA entities in vivo and helps enforce protein L-homochirality. The chain is D-aminoacyl-tRNA deacylase from Variovorax paradoxus (strain S110).